Here is a 789-residue protein sequence, read N- to C-terminus: E3 UFM1-protein ligase 1 (789 aa).

Residues 2–212 are required for E3 UFM1-protein ligase activity; the sequence is AADWEEIRRL…VSNLITRYGF (211 aa). Disordered stretches follow at residues 407–470 and 743–763; these read LENS…TGRN and SKKA…ADTI. Over residues 444–453 the composition is skewed to basic residues; sequence KIKKTKKKGR. A compositionally biased stretch (acidic residues) spans 748–760; that stretch reads QEDDNKTEEEEGA.

This sequence belongs to the UFL1 family. In terms of assembly, catalytic component of the UFM1 ribosome E3 ligase (UREL) complex. Interacts with E2-like enzyme UFC1.

Its subcellular location is the endoplasmic reticulum membrane. It localises to the cytoplasm. The protein resides in the cytosol. It is found in the nucleus. The protein localises to the chromosome. E3 protein ligase that mediates ufmylation, the covalent attachment of the ubiquitin-like modifier UFM1 to lysine residues on target proteins, and which plays a key role in various processes, such as ribosome recycling, response to DNA damage, interferon response or reticulophagy (also called ER-phagy). As part of the UREL complex, plays a key role in ribosome recycling by catalyzing mono-ufmylation of RPL26/uL24 subunit of the 60S ribosome. Ufmylation of RPL26/uL24 occurs on free 60S ribosomes following ribosome dissociation: it weakens the junction between post-termination 60S subunits and SEC61 translocons, promoting release and recycling of the large ribosomal subunit from the endoplasmic reticulum membrane. Ufmylation of RPL26/uL24 and subsequent 60S ribosome recycling either take place after normal termination of translation or after ribosome stalling during cotranslational translocation at the endoplasmic reticulum. Involved in reticulophagy in response to endoplasmic reticulum stress by mediating ufmylation of proteins such as CYB5R3 and RPN1, thereby promoting lysosomal degradation of ufmylated proteins. Ufmylation in response to endoplasmic reticulum stress is essential for processes such as hematopoiesis, blood vessel morphogenesis or inflammatory response. In Gallus gallus (Chicken), this protein is E3 UFM1-protein ligase 1.